We begin with the raw amino-acid sequence, 554 residues long: Urocanate hydratase (554 aa).

Residues 51–52, glutamine 129, 175–177, glutamate 195, arginine 200, 241–242, 262–266, 272–273, and tyrosine 321 each bind NAD(+); these read GG, GMG, NA, QTSAH, and YL. Cysteine 409 is a catalytic residue. Residue glycine 491 coordinates NAD(+).

This sequence belongs to the urocanase family. It depends on NAD(+) as a cofactor.

It is found in the cytoplasm. It catalyses the reaction 4-imidazolone-5-propanoate = trans-urocanate + H2O. It participates in amino-acid degradation; L-histidine degradation into L-glutamate; N-formimidoyl-L-glutamate from L-histidine: step 2/3. Its function is as follows. Catalyzes the conversion of urocanate to 4-imidazolone-5-propionate. The protein is Urocanate hydratase of Caulobacter sp. (strain K31).